The following is a 183-amino-acid chain: Glutathione-regulated potassium-efflux system ancillary protein KefG (183 aa).

The protein belongs to the NAD(P)H dehydrogenase (quinone) family. KefG subfamily. As to quaternary structure, interacts with KefB.

It localises to the cell inner membrane. It catalyses the reaction a quinone + NADH + H(+) = a quinol + NAD(+). The catalysed reaction is a quinone + NADPH + H(+) = a quinol + NADP(+). Regulatory subunit of a potassium efflux system that confers protection against electrophiles. Required for full activity of KefB. The sequence is that of Glutathione-regulated potassium-efflux system ancillary protein KefG from Yersinia pestis bv. Antiqua (strain Angola).